The sequence spans 121 residues: uncharacterized protein (121 aa).

It is found in the mitochondrion. This is an uncharacterized protein from Arabidopsis thaliana (Mouse-ear cress).